A 569-amino-acid polypeptide reads, in one-letter code: Phenylalanine ammonia-lyase (569 aa).

Tyr78 serves as the catalytic Proton donor/acceptor. A cross-link (5-imidazolinone (Ala-Gly)) is located at residues 167–169 (ASG). The residue at position 168 (Ser168) is a 2,3-didehydroalanine (Ser). Positions 223, 311, 317, 347, 419, 448, and 451 each coordinate (E)-cinnamate.

It belongs to the PAL/histidase family. Homotetramer. Post-translationally, contains an active site 4-methylidene-imidazol-5-one (MIO), which is formed autocatalytically by cyclization and dehydration of residues Ala-Ser-Gly.

It localises to the cytoplasm. The catalysed reaction is L-phenylalanine = (E)-cinnamate + NH4(+). The protein operates within phenylpropanoid metabolism; trans-cinnamate biosynthesis; trans-cinnamate from L-phenylalanine: step 1/1. Functionally, catalyzes the non-oxidative deamination of L-phenylalanine to form trans-cinnamic acid, the first step in the phenylpropanoid pathway. The sequence is that of Phenylalanine ammonia-lyase from Nostoc punctiforme (strain ATCC 29133 / PCC 73102).